The chain runs to 309 residues: Probable lipid kinase YegS-like (309 aa).

The 134-residue stretch at Met1 to His134 folds into the DAGKc domain. ATP contacts are provided by residues Thr39, Gly65–Glu71, and Thr96. Positions 219, 222, and 224 each coordinate Mg(2+). The Proton acceptor role is filled by Glu280.

Belongs to the diacylglycerol/lipid kinase family. YegS lipid kinase subfamily. Mg(2+) is required as a cofactor. It depends on Ca(2+) as a cofactor.

The protein resides in the cytoplasm. Its function is as follows. Probably phosphorylates lipids; the in vivo substrate is unknown. The sequence is that of Probable lipid kinase YegS-like from Xanthomonas oryzae pv. oryzae (strain MAFF 311018).